Consider the following 139-residue polypeptide: Large ribosomal subunit protein uL16 (139 aa).

The protein belongs to the universal ribosomal protein uL16 family. In terms of assembly, part of the 50S ribosomal subunit.

In terms of biological role, binds 23S rRNA and is also seen to make contacts with the A and possibly P site tRNAs. The polypeptide is Large ribosomal subunit protein uL16 (Prosthecochloris aestuarii (strain DSM 271 / SK 413)).